Here is a 441-residue protein sequence, read N- to C-terminus: Zinc finger and BTB domain-containing protein 8A (441 aa).

The BTB domain occupies 24 to 92 (CDCSILVEGK…VYSGKLSLTG (69 aa)). Composition is skewed to polar residues over residues 143–170 (NGVERSSFYSGGWQEGSSSPRSHLSPEQ) and 178–196 (KSWNKYNYHPASQKNTQQP). Residues 143 to 251 (NGVERSSFYS…QSEEQAQIDA (109 aa)) form a disordered region. Phosphoserine occurs at positions 161 and 167. Residues lysine 178, lysine 182, lysine 191, and lysine 199 each participate in a glycyl lysine isopeptide (Lys-Gly) (interchain with G-Cter in SUMO2) cross-link. The span at 198–208 (AKHEPRKESIK) shows a compositional bias: basic and acidic residues. The span at 234–243 (SDSSSHVSQS) shows a compositional bias: low complexity. C2H2-type zinc fingers lie at residues 282–304 (FKCPYCTHVVKRKADLKRHLRCH) and 310–333 (YPCQACGKRFSRLDHLSSHFRTIH). Residue lysine 437 forms a Glycyl lysine isopeptide (Lys-Gly) (interchain with G-Cter in SUMO2) linkage.

It localises to the nucleus. May be involved in transcriptional regulation. The polypeptide is Zinc finger and BTB domain-containing protein 8A (ZBTB8A) (Homo sapiens (Human)).